We begin with the raw amino-acid sequence, 371 residues long: Cytochrome b (371 aa).

The next 4 membrane-spanning stretches (helical) occupy residues 25–45 (FGSM…FLAI), 69–90 (WMMQ…YIHI), 105–125 (WMSG…GYVL), and 170–190 (FFAL…LHII). The heme b site is built by histidine 75 and histidine 89. Histidine 174 and histidine 188 together coordinate heme b. Position 193 (histidine 193) interacts with a ubiquinone. 4 consecutive transmembrane segments (helical) span residues 218–238 (HKDL…VSFL), 280–300 (LGGA…PFTH), 312–332 (LSQL…WAAT), and 339–358 (FIII…LSTP).

This sequence belongs to the cytochrome b family. The cytochrome bc1 complex contains 3 respiratory subunits (MT-CYB, CYC1 and UQCRFS1), 2 core proteins (UQCRC1 and UQCRC2) and probably 6 low-molecular weight proteins. It depends on heme b as a cofactor.

The protein resides in the mitochondrion inner membrane. Functionally, component of the ubiquinol-cytochrome c reductase complex (complex III or cytochrome b-c1 complex) that is part of the mitochondrial respiratory chain. The b-c1 complex mediates electron transfer from ubiquinol to cytochrome c. Contributes to the generation of a proton gradient across the mitochondrial membrane that is then used for ATP synthesis. The polypeptide is Cytochrome b (MT-CYB) (Antaresia maculosa (Eastern small blotched python)).